The chain runs to 600 residues: ATP-dependent lipid A-core flippase (600 aa).

The next 4 helical transmembrane spans lie at 26–46 (VGIF…QPML), 82–102 (LLIV…NYFL), 167–187 (VFLF…MLAI), and 266–286 (PMLQ…VLFL). An ABC transmembrane type-1 domain is found at 30-321 (LLSIIGFVIF…LSEVSSTIQK (292 aa)). The 237-residue stretch at 353–589 (LEVKNLSFFY…NGYYARLHAM (237 aa)) folds into the ABC transporter domain. Residue 387–394 (GRSGSGKS) participates in ATP binding.

It belongs to the ABC transporter superfamily. Lipid exporter (TC 3.A.1.106) family. Homodimer.

It is found in the cell inner membrane. It carries out the reaction ATP + H2O + lipid A-core oligosaccharideSide 1 = ADP + phosphate + lipid A-core oligosaccharideSide 2.. Its function is as follows. Involved in lipopolysaccharide (LPS) biosynthesis. Translocates lipid A-core from the inner to the outer leaflet of the inner membrane. Transmembrane domains (TMD) form a pore in the inner membrane and the ATP-binding domain (NBD) is responsible for energy generation. The protein is ATP-dependent lipid A-core flippase of Pseudomonas syringae pv. syringae (strain B728a).